A 188-amino-acid polypeptide reads, in one-letter code: Elongation factor P (188 aa).

Belongs to the elongation factor P family.

The protein localises to the cytoplasm. It participates in protein biosynthesis; polypeptide chain elongation. Functionally, involved in peptide bond synthesis. Stimulates efficient translation and peptide-bond synthesis on native or reconstituted 70S ribosomes in vitro. Probably functions indirectly by altering the affinity of the ribosome for aminoacyl-tRNA, thus increasing their reactivity as acceptors for peptidyl transferase. This chain is Elongation factor P, found in Rhodospirillum centenum (strain ATCC 51521 / SW).